Here is a 367-residue protein sequence, read N- to C-terminus: MSLRRIMVTAVRNLHPVTLLPSPRINILYGANGSGKTSVLEAVHLLGLARSFRSTRLNPVIQYEQAACTVFGEVQLTEGGTSNLGVSRERQGEFTIRIDGQNARSAAQLAELLPLQLINPDSFRLLEGAPKIRRQFLDWGVFHVEPRFLPAWQRLQKALRQRNSWLRHGTLDPASQAAWDRELCLASAEIDEYRRNYIKALKPVFERTLSELVELDGLTLSYYRGWDKDRELQEVLASSLLRDQQMGHTQAGPQRADLRLRLAGNNAADILSRGQQKLVVCALRIAQGHLVSQARRGHCIYLVDDLPSELDDQHRRALCRLLEELRCQVFITCVDHELLREGWQTETPVALFHVEQGRITQTHDHRE.

An ATP-binding site is contributed by 30–37 (GANGSGKT).

Belongs to the RecF family.

Its subcellular location is the cytoplasm. In terms of biological role, the RecF protein is involved in DNA metabolism; it is required for DNA replication and normal SOS inducibility. RecF binds preferentially to single-stranded, linear DNA. It also seems to bind ATP. The chain is DNA replication and repair protein RecF from Pseudomonas putida (strain ATCC 47054 / DSM 6125 / CFBP 8728 / NCIMB 11950 / KT2440).